A 605-amino-acid chain; its full sequence is Aspartate--tRNA(Asp/Asn) ligase (605 aa).

E186 provides a ligand contact to L-aspartate. Residues 210-213 (QQFK) form an aspartate region. R232 and H460 together coordinate L-aspartate. An ATP-binding site is contributed by 232 to 234 (RDE). Residue E494 coordinates ATP. R501 is an L-aspartate binding site. 546 to 549 (GLDR) provides a ligand contact to ATP.

It belongs to the class-II aminoacyl-tRNA synthetase family. Type 1 subfamily. Homodimer.

The protein localises to the cytoplasm. It carries out the reaction tRNA(Asx) + L-aspartate + ATP = L-aspartyl-tRNA(Asx) + AMP + diphosphate. Aspartyl-tRNA synthetase with relaxed tRNA specificity since it is able to aspartylate not only its cognate tRNA(Asp) but also tRNA(Asn). Reaction proceeds in two steps: L-aspartate is first activated by ATP to form Asp-AMP and then transferred to the acceptor end of tRNA(Asp/Asn). The sequence is that of Aspartate--tRNA(Asp/Asn) ligase from Chlorobium chlorochromatii (strain CaD3).